Reading from the N-terminus, the 314-residue chain is Methionyl-tRNA formyltransferase (314 aa).

Ser113–Pro116 provides a ligand contact to (6S)-5,6,7,8-tetrahydrofolate.

It belongs to the Fmt family.

It carries out the reaction L-methionyl-tRNA(fMet) + (6R)-10-formyltetrahydrofolate = N-formyl-L-methionyl-tRNA(fMet) + (6S)-5,6,7,8-tetrahydrofolate + H(+). Its function is as follows. Attaches a formyl group to the free amino group of methionyl-tRNA(fMet). The formyl group appears to play a dual role in the initiator identity of N-formylmethionyl-tRNA by promoting its recognition by IF2 and preventing the misappropriation of this tRNA by the elongation apparatus. The chain is Methionyl-tRNA formyltransferase from Serratia proteamaculans (strain 568).